The sequence spans 102 residues: Urease subunit beta (102 aa).

The protein belongs to the urease beta subunit family. Heterotrimer of UreA (gamma), UreB (beta) and UreC (alpha) subunits. Three heterotrimers associate to form the active enzyme.

The protein localises to the cytoplasm. The catalysed reaction is urea + 2 H2O + H(+) = hydrogencarbonate + 2 NH4(+). It functions in the pathway nitrogen metabolism; urea degradation; CO(2) and NH(3) from urea (urease route): step 1/1. The protein is Urease subunit beta of Methylobacillus flagellatus (strain ATCC 51484 / DSM 6875 / VKM B-1610 / KT).